The primary structure comprises 124 residues: Anamorsin homolog (124 aa).

Residues 1-20 (MSSPAPSTSHNAANSTQAFS) show a composition bias toward polar residues. 2 disordered regions span residues 1–39 (MSSP…EDRE) and 40–124 (AKST…TDDI). [2Fe-2S] cluster-binding residues include cysteine 49, cysteine 56, cysteine 59, and cysteine 61. The fe-S binding site A stretch occupies residues 49 to 61 (CATRRRACKNCTC). The [4Fe-4S] cluster site is built by cysteine 86, cysteine 89, cysteine 97, and cysteine 100. Short sequence motifs (cx2C motif) lie at residues 86–89 (CGNC) and 97–100 (CAGC). Residues 86–100 (CGNCAKGDAFRCAGC) are fe-S binding site B.

Belongs to the anamorsin family. In terms of assembly, monomer. The cofactor is [2Fe-2S] cluster. [4Fe-4S] cluster serves as cofactor.

The protein resides in the cytoplasm. It localises to the mitochondrion intermembrane space. Component of the cytosolic iron-sulfur (Fe-S) protein assembly (CIA) machinery. Required for the maturation of extramitochondrial Fe-S proteins. Part of an electron transfer chain functioning in an early step of cytosolic Fe-S biogenesis, facilitating the de novo assembly of a [4Fe-4S] cluster on the cytosolic Fe-S scaffold complex. Electrons are transferred from NADPH via a FAD- and FMN-containing diflavin oxidoreductase. Together with the diflavin oxidoreductase, also required for the assembly of the diferric tyrosyl radical cofactor of ribonucleotide reductase (RNR), probably by providing electrons for reduction during radical cofactor maturation in the catalytic small subunit. The protein is Anamorsin homolog of Trypanosoma brucei brucei (strain 927/4 GUTat10.1).